Reading from the N-terminus, the 309-residue chain is Homoserine O-succinyltransferase (309 aa).

Cysteine 142 serves as the catalytic Acyl-thioester intermediate. 2 residues coordinate substrate: lysine 163 and serine 192. Histidine 235 serves as the catalytic Proton acceptor. Glutamate 237 is a catalytic residue. Arginine 249 is a substrate binding site.

The protein belongs to the MetA family.

The protein resides in the cytoplasm. It catalyses the reaction L-homoserine + succinyl-CoA = O-succinyl-L-homoserine + CoA. It functions in the pathway amino-acid biosynthesis; L-methionine biosynthesis via de novo pathway; O-succinyl-L-homoserine from L-homoserine: step 1/1. In terms of biological role, transfers a succinyl group from succinyl-CoA to L-homoserine, forming succinyl-L-homoserine. This chain is Homoserine O-succinyltransferase, found in Klebsiella pneumoniae subsp. pneumoniae (strain ATCC 700721 / MGH 78578).